The chain runs to 311 residues: Ornithine carbamoyltransferase (311 aa).

Carbamoyl phosphate is bound by residues 52–55 (STRT), glutamine 79, arginine 103, and 129–132 (HPVQ). Residues asparagine 167, aspartate 226, and 230-231 (SM) contribute to the L-ornithine site. Residues 266-267 (CL) and arginine 294 each bind carbamoyl phosphate.

Belongs to the aspartate/ornithine carbamoyltransferase superfamily. OTCase family.

It is found in the cytoplasm. It carries out the reaction carbamoyl phosphate + L-ornithine = L-citrulline + phosphate + H(+). It functions in the pathway amino-acid biosynthesis; L-arginine biosynthesis; L-arginine from L-ornithine and carbamoyl phosphate: step 1/3. In terms of biological role, reversibly catalyzes the transfer of the carbamoyl group from carbamoyl phosphate (CP) to the N(epsilon) atom of ornithine (ORN) to produce L-citrulline. This chain is Ornithine carbamoyltransferase, found in Sorangium cellulosum (strain So ce56) (Polyangium cellulosum (strain So ce56)).